A 116-amino-acid polypeptide reads, in one-letter code: NADH-ubiquinone oxidoreductase chain 3 (116 aa).

3 consecutive transmembrane segments (helical) span residues 3–23 (LITT…TISF), 56–76 (FFLI…LLPL), and 87–107 (LTLI…IYEW).

The protein belongs to the complex I subunit 3 family.

It localises to the mitochondrion membrane. It catalyses the reaction a ubiquinone + NADH + 5 H(+)(in) = a ubiquinol + NAD(+) + 4 H(+)(out). Its function is as follows. Core subunit of the mitochondrial membrane respiratory chain NADH dehydrogenase (Complex I) that is believed to belong to the minimal assembly required for catalysis. Complex I functions in the transfer of electrons from NADH to the respiratory chain. The immediate electron acceptor for the enzyme is believed to be ubiquinone. This is NADH-ubiquinone oxidoreductase chain 3 (MT-ND3) from Oncorhynchus mykiss (Rainbow trout).